Here is a 1001-residue protein sequence, read N- to C-terminus: Ulvan lyase, long isoform (1001 aa).

The signal sequence occupies residues 1-21 (MNGLKMLLFSTTLLTAFTLHA). 126–127 (SH) is a binding site for substrate. Histidine 127 (proton donor/acceptor) is an active-site residue. Positions 189, 199, and 201 each coordinate Ca(2+). Substrate-binding residues include tyrosine 280 and arginine 297. Aspartate 300, aspartate 303, and tyrosine 305 together coordinate Ca(2+). Tyrosine 361 contributes to the substrate binding site.

The protein belongs to the polysaccharide lyase 24 family.

In terms of biological role, ulvan lyase involved in ulvan degradation. Ulvan is the main polysaccharide component of the Ulvales (green seaweed) cell wall. It is composed of disaccharide building blocks comprising 3-sulfated rhamnose (Rha3S) linked to D-glucuronic acid (GlcA), L-iduronic acid (IduA), or D-xylose (Xyl). Ulvan lyase catalyzes preferentially the endolytic cleavage of the glycosidic bond between Rha3S and the uronic acid GlcA, but not IduA, producing oligosaccharides that have unsaturated 4-deoxy-L-threo-hex-4-enopyranosiduronic acid (deltaUA) at the non-reducing end. The most abundant end products in the degradation of the ulvan polysaccharide were deltaUA-Rha3S disaccharides and deltaUA-Rha3S-IduA-Rha3S and deltaUA-Rha3S-Xyl-Rha3S tetrasaccharides. This chain is Ulvan lyase, long isoform, found in Pseudoalteromonas sp. (strain PLSV).